Reading from the N-terminus, the 684-residue chain is Pre-mRNA-splicing factor CLF1 (684 aa).

HAT repeat units follow at residues 43–75, 77–109, 111–143, 145–176, 178–209, 211–251, 253–285, 295–327, 332–364, 374–410, 412–443, 445–477, 518–550, and 584–622; these read DWQR…FEFD, KDIR…SEIK, KNIN…LEES, GNQG…FETR, LNFE…FEQT, GDIS…WEAS, GEYE…FEKK, IVIA…LVEE, QLTS…ICVR, NDLP…FEIR, NNLL…LEIR, KEFD…LEEN, AEYE…FEST, and ENKH…YEKV.

Belongs to the crooked-neck family. As to quaternary structure, associated with the spliceosome.

It is found in the nucleus. Functionally, involved in pre-mRNA splicing and cell cycle progression. Required for the spliceosome assembly and initiation of the DNA replication. The chain is Pre-mRNA-splicing factor CLF1 (CLF1) from Kluyveromyces lactis (strain ATCC 8585 / CBS 2359 / DSM 70799 / NBRC 1267 / NRRL Y-1140 / WM37) (Yeast).